The following is a 125-amino-acid chain: Mitochondrial import inner membrane translocase subunit TIM16 (125 aa).

A J-like region spans residues 58 to 110; the sequence is EAQQILNVSKLSPEEVQKNYEHLFKVNDKSVGGSFYLQSKVVRAKERLDEELR. Phosphoserine is present on Ser69.

The protein belongs to the TIM16/PAM16 family. In terms of assembly, probable component of the PAM complex at least composed of a mitochondrial HSP70 protein, GRPEL1 or GRPEL2, TIMM44, TIMM16/PAM16 and TIMM14/DNAJC19. Interacts with DNAJC19. Directly interacts with DNAJC15; this interaction counteracts DNAJC15-dependent stimulation of HSPA9 ATPase activity. Associates with the TIM23 complex. Expressed in trabecular bone and cartilage and by differentiated chondrocytes localized in the hypertrophic zone and by osteoblasts at early developmental stages.

The protein resides in the mitochondrion inner membrane. In terms of biological role, regulates ATP-dependent protein translocation into the mitochondrial matrix. Inhibits DNAJC19 stimulation of HSPA9/Mortalin ATPase activity. This is Mitochondrial import inner membrane translocase subunit TIM16 from Mus musculus (Mouse).